Here is a 43-residue protein sequence, read N- to C-terminus: Snaclec lebecetin subunit beta (43 aa).

Residues 1–43 (ALNCASGWSGGYDQHCYKVFDIPPSWAADEKFCKQQTSGGHLV) enclose the C-type lectin domain. C4 and C16 are disulfide-bonded.

Heterodimer of subunits alpha and beta; disulfide-linked. Ca(2+) serves as cofactor. Post-translationally, glycosylated. In terms of tissue distribution, expressed by the venom gland.

It is found in the secreted. In terms of biological role, binds to the platelet GPIb/IX/V receptor system and inhibits ristocetin-induced platelet aggregation in human platelet-rich plasma. Strongly inhibits platelet aggregation induced by ADP, calcium ionophore, thrombin and collagen. Does not inhibit U46619-induced platelet aggregation. The chain is Snaclec lebecetin subunit beta from Macrovipera lebetinus (Levantine viper).